A 201-amino-acid polypeptide reads, in one-letter code: Superoxide dismutase [Mn/Fe] (201 aa).

Positions 27, 75, 161, and 165 each coordinate Fe(3+). The Mn(2+) site is built by His-27, His-75, Asp-161, and His-165.

The protein belongs to the iron/manganese superoxide dismutase family. As to quaternary structure, homotetramer. Mn(2+) serves as cofactor. It depends on Fe(3+) as a cofactor.

It catalyses the reaction 2 superoxide + 2 H(+) = H2O2 + O2. Its activity is regulated as follows. Shows decreasing activity with increasing pH. Slightly inhibited by azide and fluoride at pH 7-8; the inhibition is drastically increased towards lower pH. Its function is as follows. Destroys superoxide anion radicals which are normally produced within the cells and which are toxic to biological systems. Catalyzes the dismutation of superoxide anion radicals into O2 and H2O2 by successive reduction and oxidation of the transition metal ion at the active site. The sequence is that of Superoxide dismutase [Mn/Fe] (sodA) from Propionibacterium freudenreichii subsp. shermanii.